The sequence spans 126 residues: Small ribosomal subunit protein bS6 (126 aa).

Positions 104 to 126 (LARRDRGDRPERPREDFGAQAQA) are disordered. The span at 105–120 (ARRDRGDRPERPREDF) shows a compositional bias: basic and acidic residues.

The protein belongs to the bacterial ribosomal protein bS6 family.

Its function is as follows. Binds together with bS18 to 16S ribosomal RNA. This is Small ribosomal subunit protein bS6 from Caulobacter vibrioides (strain ATCC 19089 / CIP 103742 / CB 15) (Caulobacter crescentus).